Consider the following 217-residue polypeptide: 3,4-dihydroxy-2-butanone 4-phosphate synthase (217 aa).

Residues R37 to E38, D42, R150 to T154, and E174 each bind D-ribulose 5-phosphate. E38 contributes to the Mg(2+) binding site. H153 is a Mg(2+) binding site.

Belongs to the DHBP synthase family. Homodimer. The cofactor is Mg(2+). Mn(2+) serves as cofactor.

The enzyme catalyses D-ribulose 5-phosphate = (2S)-2-hydroxy-3-oxobutyl phosphate + formate + H(+). It functions in the pathway cofactor biosynthesis; riboflavin biosynthesis; 2-hydroxy-3-oxobutyl phosphate from D-ribulose 5-phosphate: step 1/1. In terms of biological role, catalyzes the conversion of D-ribulose 5-phosphate to formate and 3,4-dihydroxy-2-butanone 4-phosphate. This Pseudoalteromonas translucida (strain TAC 125) protein is 3,4-dihydroxy-2-butanone 4-phosphate synthase.